The chain runs to 441 residues: Ribulose bisphosphate carboxylase large chain (441 aa).

Lysine 5 is modified (N6,N6,N6-trimethyllysine). Substrate contacts are provided by asparagine 114 and threonine 164. The active-site Proton acceptor is lysine 166. Lysine 168 contributes to the substrate binding site. Mg(2+)-binding residues include lysine 192, aspartate 194, and glutamate 195. The residue at position 192 (lysine 192) is an N6-carboxylysine. The Proton acceptor role is filled by histidine 285. Substrate is bound by residues arginine 286, histidine 318, and serine 370.

It belongs to the RuBisCO large chain family. Type I subfamily. As to quaternary structure, heterohexadecamer of 8 large chains and 8 small chains; disulfide-linked. The disulfide link is formed within the large subunit homodimers. The cofactor is Mg(2+). The disulfide bond which can form in the large chain dimeric partners within the hexadecamer appears to be associated with oxidative stress and protein turnover.

The protein resides in the plastid. It is found in the chloroplast. The catalysed reaction is 2 (2R)-3-phosphoglycerate + 2 H(+) = D-ribulose 1,5-bisphosphate + CO2 + H2O. It catalyses the reaction D-ribulose 1,5-bisphosphate + O2 = 2-phosphoglycolate + (2R)-3-phosphoglycerate + 2 H(+). Its function is as follows. RuBisCO catalyzes two reactions: the carboxylation of D-ribulose 1,5-bisphosphate, the primary event in carbon dioxide fixation, as well as the oxidative fragmentation of the pentose substrate in the photorespiration process. Both reactions occur simultaneously and in competition at the same active site. This Glycyrrhiza echinata (Licorice) protein is Ribulose bisphosphate carboxylase large chain.